Consider the following 353-residue polypeptide: MNGNQKLDAYNQEKQNFIQHFSQIVKVLTEKELGHPEIGDAIARLKEVLEYNALGGKYNRGLTVVQAFQELVEPKKQDAESLQRALTVGWCVELLQAFFLVSDDIMDSSLTRRGQICWYQKPGIGLDAINDALLLEASIYRLLKFYCREQPYYLNLLELFLQSSYQTEIGQTLDLMTAPQGHVDLGRYTEKRYKSIVKYKTAFYSFYLPIAAAMYMAGIDGEKEHANALKILMEMGEFFQVQDDYLDLFGDPSVTGKVGTDIQDNKCSWLVVQCLLRASPQQRQILEENYGQKDPEKVARVKALYEALDLQSAFFKYEEDSYNRLKSLIEQCSAPLPPSIFMELANKIYKRRK.

3 residues coordinate isopentenyl diphosphate: Lys57, Arg60, and Gln96. Lys57 bears the N6-(2-hydroxyisobutyryl)lysine; alternate mark. Lys57 carries the N6-acetyllysine; alternate modification. 2 residues coordinate Mg(2+): Asp103 and Asp107. Arg112 lines the dimethylallyl diphosphate pocket. Arg113 serves as a coordination point for isopentenyl diphosphate. Dimethylallyl diphosphate contacts are provided by Lys200, Thr201, Gln240, Lys257, and Lys266.

It belongs to the FPP/GGPP synthase family. Homodimer. Interacts with RSAD2. It depends on Mg(2+) as a cofactor.

Its subcellular location is the cytoplasm. The catalysed reaction is isopentenyl diphosphate + dimethylallyl diphosphate = (2E)-geranyl diphosphate + diphosphate. It catalyses the reaction isopentenyl diphosphate + (2E)-geranyl diphosphate = (2E,6E)-farnesyl diphosphate + diphosphate. The protein operates within isoprenoid biosynthesis; farnesyl diphosphate biosynthesis; farnesyl diphosphate from geranyl diphosphate and isopentenyl diphosphate: step 1/1. It functions in the pathway isoprenoid biosynthesis; geranyl diphosphate biosynthesis; geranyl diphosphate from dimethylallyl diphosphate and isopentenyl diphosphate: step 1/1. With respect to regulation, inactivated by interferon-induced RSAD2. This inactivation may result of disruption of lipid rafts at the plasma membrane, and thus have an antiviral effect since many enveloped viruses need lipid rafts to bud efficiently out of the cell. Its function is as follows. Key enzyme in isoprenoid biosynthesis which catalyzes the formation of farnesyl diphosphate (FPP), a precursor for several classes of essential metabolites including sterols, dolichols, carotenoids, and ubiquinones. FPP also serves as substrate for protein farnesylation and geranylgeranylation. Catalyzes the sequential condensation of isopentenyl pyrophosphate with the allylic pyrophosphates, dimethylallyl pyrophosphate, and then with the resultant geranylpyrophosphate to the ultimate product farnesyl pyrophosphate. The sequence is that of Farnesyl pyrophosphate synthase (Fdps) from Mus musculus (Mouse).